A 316-amino-acid chain; its full sequence is Pantothenate kinase (316 aa).

An ATP-binding site is contributed by 95-102; sequence GSVAVGKS.

Belongs to the prokaryotic pantothenate kinase family.

The protein resides in the cytoplasm. It catalyses the reaction (R)-pantothenate + ATP = (R)-4'-phosphopantothenate + ADP + H(+). Its pathway is cofactor biosynthesis; coenzyme A biosynthesis; CoA from (R)-pantothenate: step 1/5. This Yersinia pseudotuberculosis serotype O:3 (strain YPIII) protein is Pantothenate kinase.